A 235-amino-acid polypeptide reads, in one-letter code: Protein GrpE (235 aa).

Residues 1-18 (MTDGNQKPDGNSGEQVTV) are compositionally biased toward polar residues. 2 disordered regions span residues 1-50 (MTDG…DAAH) and 198-235 (ESVD…PSGS). Positions 19-35 (TDKRRIDPETGEVRHVP) are enriched in basic and acidic residues.

This sequence belongs to the GrpE family. In terms of assembly, homodimer.

It localises to the cytoplasm. Functionally, participates actively in the response to hyperosmotic and heat shock by preventing the aggregation of stress-denatured proteins, in association with DnaK and GrpE. It is the nucleotide exchange factor for DnaK and may function as a thermosensor. Unfolded proteins bind initially to DnaJ; upon interaction with the DnaJ-bound protein, DnaK hydrolyzes its bound ATP, resulting in the formation of a stable complex. GrpE releases ADP from DnaK; ATP binding to DnaK triggers the release of the substrate protein, thus completing the reaction cycle. Several rounds of ATP-dependent interactions between DnaJ, DnaK and GrpE are required for fully efficient folding. The protein is Protein GrpE of Mycobacterium bovis (strain BCG / Pasteur 1173P2).